Consider the following 538-residue polypeptide: CTP synthase (538 aa).

Residues 1–266 (MKTKFIFVTG…DDQVVDKLNI (266 aa)) are amidoligase domain. Serine 14 is a CTP binding site. Serine 14 is a UTP binding site. Residues 15-20 (SIGKGL) and aspartate 72 each bind ATP. Residues aspartate 72 and glutamate 140 each contribute to the Mg(2+) site. CTP is bound by residues 147–149 (DIE), 187–192 (KTKPTQ), and lysine 223. UTP-binding positions include 187 to 192 (KTKPTQ) and lysine 223. The region spanning 292-534 (HIAIVGKYVN…IAAALEHRGK (243 aa)) is the Glutamine amidotransferase type-1 domain. L-glutamine is bound at residue glycine 354. Residue cysteine 381 is the Nucleophile; for glutamine hydrolysis of the active site. Residues 382 to 385 (LGMQ), glutamate 405, and arginine 462 contribute to the L-glutamine site. Catalysis depends on residues histidine 507 and glutamate 509.

Belongs to the CTP synthase family. Homotetramer.

It catalyses the reaction UTP + L-glutamine + ATP + H2O = CTP + L-glutamate + ADP + phosphate + 2 H(+). It carries out the reaction L-glutamine + H2O = L-glutamate + NH4(+). The catalysed reaction is UTP + NH4(+) + ATP = CTP + ADP + phosphate + 2 H(+). It participates in pyrimidine metabolism; CTP biosynthesis via de novo pathway; CTP from UDP: step 2/2. Allosterically activated by GTP, when glutamine is the substrate; GTP has no effect on the reaction when ammonia is the substrate. The allosteric effector GTP functions by stabilizing the protein conformation that binds the tetrahedral intermediate(s) formed during glutamine hydrolysis. Inhibited by the product CTP, via allosteric rather than competitive inhibition. Functionally, catalyzes the ATP-dependent amination of UTP to CTP with either L-glutamine or ammonia as the source of nitrogen. Regulates intracellular CTP levels through interactions with the four ribonucleotide triphosphates. The chain is CTP synthase from Geobacter metallireducens (strain ATCC 53774 / DSM 7210 / GS-15).